A 60-amino-acid chain; its full sequence is Defensin-like protein 4 (60 aa).

Intrachain disulfides connect cysteine 4-cysteine 56, cysteine 17-cysteine 41, cysteine 26-cysteine 51, and cysteine 30-cysteine 53.

Belongs to the DEFL family. Protease inhibitor I18 (RTI/MTI-2) subfamily.

It localises to the secreted. Its function is as follows. Inhibits trypsin and chymotrypsin. The protein is Defensin-like protein 4 of Brassica napus (Rape).